Consider the following 1382-residue polypeptide: DNA-directed RNA polymerase subunit beta' (1382 aa).

Cysteine 70, cysteine 72, cysteine 85, and cysteine 88 together coordinate Zn(2+). Residues aspartate 460, aspartate 462, and aspartate 464 each contribute to the Mg(2+) site. Zn(2+)-binding residues include cysteine 808, cysteine 882, cysteine 889, and cysteine 892.

It belongs to the RNA polymerase beta' chain family. As to quaternary structure, the RNAP catalytic core consists of 2 alpha, 1 beta, 1 beta' and 1 omega subunit. When a sigma factor is associated with the core the holoenzyme is formed, which can initiate transcription. Requires Mg(2+) as cofactor. Zn(2+) is required as a cofactor.

It carries out the reaction RNA(n) + a ribonucleoside 5'-triphosphate = RNA(n+1) + diphosphate. DNA-dependent RNA polymerase catalyzes the transcription of DNA into RNA using the four ribonucleoside triphosphates as substrates. This chain is DNA-directed RNA polymerase subunit beta', found in Geobacter sp. (strain M21).